The chain runs to 111 residues: C-X-C motif chemokine 14 (111 aa).

Residues 1–34 (MSLLPRRAPPVSMRLLAAALLLLLLALYTARVDG) form the signal peptide. Intrachain disulfides connect Cys-37-Cys-63 and Cys-39-Cys-84. Positions 67–81 (MVIITTKSVSRYRGQ) match the D-box motif.

The protein belongs to the intercrine alpha (chemokine CxC) family. Post-translationally, ubiquitinated, followed by degradation by the proteasome. Expressed in heart, brain, placenta, lung, liver, skeletal muscle, kidney and pancreas. Highly expressed in normal tissue without inflammatory stimuli and infrequently expressed in cancer cell lines. Weakly expressed in monocyte-derived dendritic cells. Not detected in lung or unstimulated peripheral blood lymphocytes.

It is found in the secreted. In terms of biological role, potent chemoattractant for neutrophils, and weaker for dendritic cells. Not chemotactic for T-cells, B-cells, monocytes, natural killer cells or granulocytes. Does not inhibit proliferation of myeloid progenitors in colony formation assays. This chain is C-X-C motif chemokine 14 (CXCL14), found in Homo sapiens (Human).